A 360-amino-acid polypeptide reads, in one-letter code: POU domain, class 5, transcription factor 1 (360 aa).

2 disordered regions span residues 1-51 (MAGH…GPGV) and 88-114 (GGLETSQPEGEAGVGVESNSDGASPEP). The 9aaTAD motif lies at 4 to 12 (HLTSDFAFS). Serine 111 is subject to Phosphoserine; by MAPK. Lysine 123 is covalently cross-linked (Glycyl lysine isopeptide (Lys-Gly) (interchain with G-Cter in SUMO)). The POU-specific domain occupies 138–212 (DIKALQKELE…LLQKWVEEAD (75 aa)). Residues arginine 157 and glutamine 164 each contribute to the DNA site. DNA-binding regions lie at residues 180–186 (SQTTICR) and 193–196 (SFKN). Positions 230-289 (RKRKRTSIENRVRGNLENLFLQCPKPTLQQISHIAQQLGLEKDVVRVWFCNRRQKGKRSS) form a DNA-binding region, homeobox. At threonine 235 the chain carries Phosphothreonine. Residues serine 236, serine 289, serine 290, and serine 355 each carry the phosphoserine modification.

This sequence belongs to the POU transcription factor family. Class-5 subfamily. In terms of assembly, interacts with PKM. Interacts with WWP2. Interacts with UBE2I and ZSCAN10. Interacts with PCGF1. Interacts with ESRRB; recruits ESRRB near the POU5F1-SOX2 element in the NANOG proximal promoter; the interaction is DNA independent. Interacts with ZNF322. Interacts with MAPK8 and MAPK9; the interaction allows MAPK8 and MAPK9 to phosphorylate POU5F1 on Ser-355. Interacts (when phosphorylated on Ser-355) with FBXW8. Interacts with FBXW4. Interacts with SOX2 and SOX15; binds synergistically with either SOX2 or SOX15 to DNA. Interacts with DDX56. Sumoylation enhances the protein stability, DNA binding and transactivation activity. Sumoylation is required for enhanced YES1 expression. In terms of processing, ubiquitinated; undergoes 'Lys-63'-linked polyubiquitination by WWP2 leading to proteasomal degradation. Post-translationally, ERK1/2-mediated phosphorylation at Ser-111 promotes nuclear exclusion and proteasomal degradation. Phosphorylation at Thr-235 and Ser-236 decrease DNA-binding and alters ability to activate transcription.

The protein localises to the cytoplasm. It localises to the nucleus. Transcription factor that binds to the octamer motif (5'-ATTTGCAT-3'). Forms a trimeric complex with SOX2 or SOX15 on DNA and controls the expression of a number of genes involved in embryonic development such as YES1, FGF4, UTF1 and ZFP206. Critical for early embryogenesis and for embryonic stem cell pluripotency. This chain is POU domain, class 5, transcription factor 1 (POU5F1), found in Pan troglodytes (Chimpanzee).